Here is a 274-residue protein sequence, read N- to C-terminus: MAAPEAEVLSSAAVPDLEWYEKSEETHASQIELLETSSTQEPLNASEAFCPRDCMVPVVFPGPVSQEGCCQFTCELLKHIMYQRQQLPLPYEQLKHFYRKPSPQAEEMLKKKPRATTEVSSRKCQQALAELESVLSHLEDFFARTLVPRVLILLGGNALSPKEFYELDLSLLAPYSVDQSLSTAACLRRLFRAIFMADAFSELQAPPLMGTVVMAQGHRNCGEDWFRPKLNYRVPSRGHKLTVTLSCGRPSIRTTAWEDYIWFQAPVTFKGFRE.

Positions 45-78 are interaction with MAD2L1; that stretch reads ASEAFCPRDCMVPVVFPGPVSQEGCCQFTCELLK. S102 bears the Phosphoserine mark.

The protein belongs to the MAD2L1BP family. In terms of assembly, interacts with MAD2L1.

The protein localises to the nucleus. The protein resides in the cytoplasm. It localises to the cytoskeleton. Its subcellular location is the spindle. Its function is as follows. May function to silence the spindle checkpoint and allow mitosis to proceed through anaphase by binding MAD2L1 after it has become dissociated from the MAD2L1-CDC20 complex. In Homo sapiens (Human), this protein is MAD2L1-binding protein (MAD2L1BP).